The primary structure comprises 154 residues: Interleukin-2 (154 aa).

An N-terminal signal peptide occupies residues 1–20 (MYKMQLLCCIALTLALMANG). An O-linked (GalNAc...) threonine glycan is attached at threonine 23. Cysteine 78 and cysteine 126 are disulfide-bonded.

It belongs to the IL-2 family.

It is found in the secreted. In terms of biological role, cytokine produced by activated CD4-positive helper T-cells and to a lesser extend activated CD8-positive T-cells and natural killer (NK) cells that plays pivotal roles in the immune response and tolerance. Binds to a receptor complex composed of either the high-affinity trimeric IL-2R (IL2RA/CD25, IL2RB/CD122 and IL2RG/CD132) or the low-affinity dimeric IL-2R (IL2RB and IL2RG). Interaction with the receptor leads to oligomerization and conformation changes in the IL-2R subunits resulting in downstream signaling starting with phosphorylation of JAK1 and JAK3. In turn, JAK1 and JAK3 phosphorylate the receptor to form a docking site leading to the phosphorylation of several substrates including STAT5. This process leads to activation of several pathways including STAT, phosphoinositide-3-kinase/PI3K and mitogen-activated protein kinase/MAPK pathways. Functions as a T-cell growth factor and can increase NK-cell cytolytic activity as well. Promotes strong proliferation of activated B-cells and subsequently immunoglobulin production. Plays a pivotal role in regulating the adaptive immune system by controlling the survival and proliferation of regulatory T-cells, which are required for the maintenance of immune tolerance. Moreover, participates in the differentiation and homeostasis of effector T-cell subsets, including Th1, Th2, Th17 as well as memory CD8-positive T-cells. The protein is Interleukin-2 (IL2) of Sus scrofa (Pig).